Reading from the N-terminus, the 503-residue chain is Na(+)-translocating NADH-quinone reductase subunit B (503 aa).

4 helical membrane passes run 55–75 (MILV…NSGV), 120–142 (IFLP…FAVI), 161–181 (TLPP…GVVV), and 186–206 (FGGT…FLFF). FMN phosphoryl threonine is present on T248. A run of 5 helical transmembrane segments spans residues 361-381 (TSTF…IASW), 387-407 (FGIG…LIVG), 417-437 (FFIP…LVFM), 452-472 (WIYG…NPAY), and 475-495 (GVML…YFAV).

The protein belongs to the NqrB/RnfD family. Composed of six subunits; NqrA, NqrB, NqrC, NqrD, NqrE and NqrF. It depends on FMN as a cofactor.

The protein localises to the cell inner membrane. The enzyme catalyses a ubiquinone + n Na(+)(in) + NADH + H(+) = a ubiquinol + n Na(+)(out) + NAD(+). Functionally, NQR complex catalyzes the reduction of ubiquinone-1 to ubiquinol by two successive reactions, coupled with the transport of Na(+) ions from the cytoplasm to the periplasm. NqrA to NqrE are probably involved in the second step, the conversion of ubisemiquinone to ubiquinol. This Chlamydia felis (strain Fe/C-56) (Chlamydophila felis) protein is Na(+)-translocating NADH-quinone reductase subunit B.